The sequence spans 152 residues: Large ribosomal subunit protein uL15 (152 aa).

The tract at residues 31-58 (GASCGFGMRGQKSRSGRPTRPGFEGGQM) is disordered.

It belongs to the universal ribosomal protein uL15 family. In terms of assembly, part of the 50S ribosomal subunit.

Functionally, binds to the 23S rRNA. The protein is Large ribosomal subunit protein uL15 of Parasynechococcus marenigrum (strain WH8102).